The chain runs to 207 residues: Large ribosomal subunit protein uL4 (207 aa).

The interval 57–78 is disordered; that stretch reads VAGGGKKPWRQKGTGRARHGSI. Basic residues predominate over residues 63–77; that stretch reads KPWRQKGTGRARHGS.

This sequence belongs to the universal ribosomal protein uL4 family. Part of the 50S ribosomal subunit.

In terms of biological role, one of the primary rRNA binding proteins, this protein initially binds near the 5'-end of the 23S rRNA. It is important during the early stages of 50S assembly. It makes multiple contacts with different domains of the 23S rRNA in the assembled 50S subunit and ribosome. Forms part of the polypeptide exit tunnel. This is Large ribosomal subunit protein uL4 from Onion yellows phytoplasma (strain OY-M).